The sequence spans 482 residues: UDP-N-acetylmuramoyl-L-alanyl-D-glutamate--2,6-diaminopimelate ligase (482 aa).

Serine 24 lines the UDP-N-acetyl-alpha-D-muramoyl-L-alanyl-D-glutamate pocket. Glycine 105–threonine 111 lines the ATP pocket. Residues threonine 147–threonine 148, serine 174, glutamine 180, and arginine 182 each bind UDP-N-acetyl-alpha-D-muramoyl-L-alanyl-D-glutamate. N6-carboxylysine is present on lysine 214. Meso-2,6-diaminopimelate is bound by residues arginine 378, aspartate 402–arginine 405, glycine 453, and glutamate 457. Positions aspartate 402–arginine 405 match the Meso-diaminopimelate recognition motif motif.

The protein belongs to the MurCDEF family. MurE subfamily. It depends on Mg(2+) as a cofactor. Carboxylation is probably crucial for Mg(2+) binding and, consequently, for the gamma-phosphate positioning of ATP.

It localises to the cytoplasm. It carries out the reaction UDP-N-acetyl-alpha-D-muramoyl-L-alanyl-D-glutamate + meso-2,6-diaminopimelate + ATP = UDP-N-acetyl-alpha-D-muramoyl-L-alanyl-gamma-D-glutamyl-meso-2,6-diaminopimelate + ADP + phosphate + H(+). The protein operates within cell wall biogenesis; peptidoglycan biosynthesis. Catalyzes the addition of meso-diaminopimelic acid to the nucleotide precursor UDP-N-acetylmuramoyl-L-alanyl-D-glutamate (UMAG) in the biosynthesis of bacterial cell-wall peptidoglycan. This is UDP-N-acetylmuramoyl-L-alanyl-D-glutamate--2,6-diaminopimelate ligase from Lawsonia intracellularis (strain PHE/MN1-00).